A 267-amino-acid polypeptide reads, in one-letter code: Undecaprenyl-diphosphatase 1 (267 aa).

Helical transmembrane passes span 6–26, 41–60, 83–103, 109–129, 142–162, 185–205, 217–237, and 244–264; these read VLVV…AAGL, AALS…IYFW, HLLL…WLVL, LVGQ…LWGC, MSWV…VPGV, FSML…FWGL, LLMA…GMMA, and FVPF…LVYF.

The protein belongs to the UppP family.

The protein resides in the cell inner membrane. The catalysed reaction is di-trans,octa-cis-undecaprenyl diphosphate + H2O = di-trans,octa-cis-undecaprenyl phosphate + phosphate + H(+). In terms of biological role, catalyzes the dephosphorylation of undecaprenyl diphosphate (UPP). Confers resistance to bacitracin. In Paramagnetospirillum magneticum (strain ATCC 700264 / AMB-1) (Magnetospirillum magneticum), this protein is Undecaprenyl-diphosphatase 1.